The primary structure comprises 104 residues: MLRKAFVMSVFPDSHDEYQRRHNPIWPELAEVLKNHGAHHYSIFLDKQRNLLFGYVEVESEARWEAIAQTDVCQRWWKHMGDVMPSNPDNSPISDALDPVFYLD.

Tyrosine 18 is a substrate binding site. The Proton donor role is filled by histidine 22. Residues tyrosine 41 and 76 to 77 (WW) each bind substrate. Residues 85 to 104 (PSNPDNSPISDALDPVFYLD) are disordered.

This sequence belongs to the rhamnose mutarotase family. In terms of assembly, homodimer.

The protein resides in the cytoplasm. It catalyses the reaction alpha-L-rhamnose = beta-L-rhamnose. The protein operates within carbohydrate metabolism; L-rhamnose metabolism. Involved in the anomeric conversion of L-rhamnose. This chain is L-rhamnose mutarotase, found in Pectobacterium atrosepticum (strain SCRI 1043 / ATCC BAA-672) (Erwinia carotovora subsp. atroseptica).